The chain runs to 559 residues: uncharacterized protein (559 aa).

The segment covering 1–10 has biased composition (basic and acidic residues); sequence MSGRRGDHPG. The tract at residues 1 to 76 is disordered; the sequence is MSGRRGDHPG…ERSRVPPRTT (76 aa). Helical transmembrane passes span 128 to 148, 155 to 175, 186 to 206, 208 to 228, 259 to 279, 283 to 303, 358 to 378, 387 to 407, 428 to 448, 490 to 510, and 515 to 535; these read FAVD…AAAS, VALY…LIGP, VALA…IMNY, GATG…MMVF, VFGL…VEFV, LFQL…GASL, LWGN…PAFV, WVQL…NFAG, VLVT…ATAI, LAWV…WVGF, and ALLI…SLIP.

It to M.leprae ML2143.

It is found in the cell membrane. This is an uncharacterized protein from Mycobacterium tuberculosis (strain CDC 1551 / Oshkosh).